The following is a 143-amino-acid chain: Mite group 2 allergen Pso o 2 (143 aa).

Positions 1 to 17 (MMKTLVVLAITLAVVSA) are cleaved as a signal peptide. Disulfide bonds link Cys-25-Cys-134, Cys-38-Cys-43, and Cys-89-Cys-94.

This sequence belongs to the NPC2 family.

The protein localises to the secreted. The protein is Mite group 2 allergen Pso o 2 (ALLA) of Psoroptes ovis (Sheep scab mite).